We begin with the raw amino-acid sequence, 160 residues long: Phosphopantetheine adenylyltransferase (160 aa).

Residue Thr-10 coordinates substrate. Residues 10–11 and His-18 each bind ATP; that span reads TF. Residues Lys-42, Met-74, and Arg-88 each coordinate substrate. ATP is bound by residues 89-91, Glu-99, and 124-130; these read GVR and WSYISST.

The protein belongs to the bacterial CoaD family. Homohexamer. Requires Mg(2+) as cofactor.

Its subcellular location is the cytoplasm. It catalyses the reaction (R)-4'-phosphopantetheine + ATP + H(+) = 3'-dephospho-CoA + diphosphate. The protein operates within cofactor biosynthesis; coenzyme A biosynthesis; CoA from (R)-pantothenate: step 4/5. In terms of biological role, reversibly transfers an adenylyl group from ATP to 4'-phosphopantetheine, yielding dephospho-CoA (dPCoA) and pyrophosphate. In Sodalis glossinidius (strain morsitans), this protein is Phosphopantetheine adenylyltransferase.